The following is a 104-amino-acid chain: Large ribosomal subunit protein bL21 (104 aa).

The protein belongs to the bacterial ribosomal protein bL21 family. As to quaternary structure, part of the 50S ribosomal subunit. Contacts protein L20.

Its function is as follows. This protein binds to 23S rRNA in the presence of protein L20. The chain is Large ribosomal subunit protein bL21 from Gluconacetobacter diazotrophicus (strain ATCC 49037 / DSM 5601 / CCUG 37298 / CIP 103539 / LMG 7603 / PAl5).